A 207-amino-acid polypeptide reads, in one-letter code: ATP-dependent dethiobiotin synthetase BioD (207 aa).

An ATP-binding site is contributed by Glu-13–Val-18. Thr-17 serves as a coordination point for Mg(2+). Lys-33 is an active-site residue. Residues Asp-44 and Glu-100–Gly-103 each bind ATP. Mg(2+) contacts are provided by Asp-44 and Glu-100.

It belongs to the dethiobiotin synthetase family. Homodimer. Mg(2+) is required as a cofactor.

It is found in the cytoplasm. It carries out the reaction (7R,8S)-7,8-diammoniononanoate + CO2 + ATP = (4R,5S)-dethiobiotin + ADP + phosphate + 3 H(+). Its pathway is cofactor biosynthesis; biotin biosynthesis; biotin from 7,8-diaminononanoate: step 1/2. Its function is as follows. Catalyzes a mechanistically unusual reaction, the ATP-dependent insertion of CO2 between the N7 and N8 nitrogen atoms of 7,8-diaminopelargonic acid (DAPA, also called 7,8-diammoniononanoate) to form a ureido ring. The protein is ATP-dependent dethiobiotin synthetase BioD of Christiangramia forsetii (strain DSM 17595 / CGMCC 1.15422 / KT0803) (Gramella forsetii).